The chain runs to 164 residues: 6,7-dimethyl-8-ribityllumazine synthase 1 (164 aa).

5-amino-6-(D-ribitylamino)uracil-binding positions include Phe-27, Ser-58–Glu-60, and Thr-87–Ile-89. Position 92–93 (Asp-92–Thr-93) interacts with (2S)-2-hydroxy-3-oxobutyl phosphate. His-95 serves as the catalytic Proton donor. 5-amino-6-(D-ribitylamino)uracil is bound at residue Asn-120. Arg-134 lines the (2S)-2-hydroxy-3-oxobutyl phosphate pocket.

Belongs to the DMRL synthase family. Homopentamer.

It carries out the reaction (2S)-2-hydroxy-3-oxobutyl phosphate + 5-amino-6-(D-ribitylamino)uracil = 6,7-dimethyl-8-(1-D-ribityl)lumazine + phosphate + 2 H2O + H(+). Its pathway is cofactor biosynthesis; riboflavin biosynthesis; riboflavin from 2-hydroxy-3-oxobutyl phosphate and 5-amino-6-(D-ribitylamino)uracil: step 1/2. Its function is as follows. Catalyzes the formation of 6,7-dimethyl-8-ribityllumazine by condensation of 5-amino-6-(D-ribitylamino)uracil with 3,4-dihydroxy-2-butanone 4-phosphate. This is the penultimate step in the biosynthesis of riboflavin. This chain is 6,7-dimethyl-8-ribityllumazine synthase 1 (ribH1), found in Mesorhizobium japonicum (strain LMG 29417 / CECT 9101 / MAFF 303099) (Mesorhizobium loti (strain MAFF 303099)).